The sequence spans 56 residues: Small ribosomal subunit protein uS14 (56 aa).

Positions 21, 24, 39, and 42 each coordinate Zn(2+).

The protein belongs to the universal ribosomal protein uS14 family. In terms of assembly, component of the 40S small ribosomal subunit. Zn(2+) is required as a cofactor.

The protein resides in the cytoplasm. The protein localises to the cytosol. It is found in the rough endoplasmic reticulum. This chain is Small ribosomal subunit protein uS14 (RpS29), found in Scarabaeus laticollis (Scarab dung beetle).